Reading from the N-terminus, the 892-residue chain is Transposase for transposon Tn4556 (892 aa).

Over residues 1–12 (MGGRAGLDDGRG) the composition is skewed to basic and acidic residues. Residues 1 to 63 (MGGRAGLDDG…GQPARDAEHR (63 aa)) form a disordered region. Positions 23-34 (VAEGAAGAAAWG) are enriched in low complexity.

The protein belongs to the transposase 7 family.

Its function is as follows. Required for transposition of transposon Tn4556. The protein is Transposase for transposon Tn4556 (tnpA) of Streptomyces fradiae (Streptomyces roseoflavus).